The primary structure comprises 359 residues: MIALPQDRMDQLLKRFSMIESQMANNPDSDTYVKLASEYSELQDVVGKIRELSDARMEASDLAAMRDDASTDAEMRALAVEELPEVEKRIAVLEQDVQILLLPKDAADDKNAILEIRAGTGGLEAALFAGDLFRMYERYAAEKGWRVELVSASEGDAGGYKEIIATVSGKGVFSKLKFESGVHRVQRVPETEAGGRIHTSAATVAVLPEAEDIDIEIRNEDIRIDTMRASGAGGQHVNTTDSAVRITHIPTGIMVVQAEKSQHQNRARAMQILRARLYDMERQKAESERSQARRSQVGSGDRSERIRTYNFPQGRVTDHRINLTLYKLDRVMEGELDELVDALISDHQTALLAELGEQP.

Gln235 carries the N5-methylglutamine modification. The disordered stretch occupies residues 283 to 309; that stretch reads QKAESERSQARRSQVGSGDRSERIRTY.

Belongs to the prokaryotic/mitochondrial release factor family. Post-translationally, methylated by PrmC. Methylation increases the termination efficiency of RF1.

It is found in the cytoplasm. Peptide chain release factor 1 directs the termination of translation in response to the peptide chain termination codons UAG and UAA. The protein is Peptide chain release factor 1 of Brucella melitensis biotype 2 (strain ATCC 23457).